The following is a 138-amino-acid chain: Ferredoxin-2 (138 aa).

The 91-residue stretch at 27 to 117 folds into the 2Fe-2S ferredoxin-type domain; that stretch reads ADANLQSTDF…DAKIVYNLKH (91 aa). [2Fe-2S] cluster contacts are provided by Cys-62, Cys-67, Cys-70, and Cys-100.

It belongs to the 2Fe2S plant-type ferredoxin family. Requires [2Fe-2S] cluster as cofactor.

Functionally, ferredoxins are iron-sulfur proteins that transfer electrons in a wide variety of metabolic reactions. In Haloarcula marismortui (strain ATCC 43049 / DSM 3752 / JCM 8966 / VKM B-1809) (Halobacterium marismortui), this protein is Ferredoxin-2 (fer2).